The following is a 337-amino-acid chain: Holliday junction branch migration complex subunit RuvB (337 aa).

The large ATPase domain (RuvB-L) stretch occupies residues 4–185; the sequence is ADRLISNSFE…FGITQRLEYY (182 aa). ATP-binding positions include I24, R25, G66, K69, T70, T71, 132–134, R175, Y185, and R222; that span reads EDY. Residue T70 participates in Mg(2+) binding. The tract at residues 186 to 256 is small ATPAse domain (RuvB-S); sequence KVDDLKDIVQ…TAKKALDMLD (71 aa). Positions 259 to 337 are head domain (RuvB-H); it reads SSGFDYMDRK…HFGLDIPEAR (79 aa). Residues R314 and R319 each contribute to the DNA site.

This sequence belongs to the RuvB family. As to quaternary structure, homohexamer. Forms an RuvA(8)-RuvB(12)-Holliday junction (HJ) complex. HJ DNA is sandwiched between 2 RuvA tetramers; dsDNA enters through RuvA and exits via RuvB. An RuvB hexamer assembles on each DNA strand where it exits the tetramer. Each RuvB hexamer is contacted by two RuvA subunits (via domain III) on 2 adjacent RuvB subunits; this complex drives branch migration. In the full resolvosome a probable DNA-RuvA(4)-RuvB(12)-RuvC(2) complex forms which resolves the HJ.

It localises to the cytoplasm. The enzyme catalyses ATP + H2O = ADP + phosphate + H(+). In terms of biological role, the RuvA-RuvB-RuvC complex processes Holliday junction (HJ) DNA during genetic recombination and DNA repair, while the RuvA-RuvB complex plays an important role in the rescue of blocked DNA replication forks via replication fork reversal (RFR). RuvA specifically binds to HJ cruciform DNA, conferring on it an open structure. The RuvB hexamer acts as an ATP-dependent pump, pulling dsDNA into and through the RuvAB complex. RuvB forms 2 homohexamers on either side of HJ DNA bound by 1 or 2 RuvA tetramers; 4 subunits per hexamer contact DNA at a time. Coordinated motions by a converter formed by DNA-disengaged RuvB subunits stimulates ATP hydrolysis and nucleotide exchange. Immobilization of the converter enables RuvB to convert the ATP-contained energy into a lever motion, pulling 2 nucleotides of DNA out of the RuvA tetramer per ATP hydrolyzed, thus driving DNA branch migration. The RuvB motors rotate together with the DNA substrate, which together with the progressing nucleotide cycle form the mechanistic basis for DNA recombination by continuous HJ branch migration. Branch migration allows RuvC to scan DNA until it finds its consensus sequence, where it cleaves and resolves cruciform DNA. This chain is Holliday junction branch migration complex subunit RuvB, found in Photobacterium profundum (strain SS9).